The sequence spans 632 residues: ATP-dependent DNA helicase RecQ (632 aa).

Positions 47–215 constitute a Helicase ATP-binding domain; sequence IDATLMGKDS…LRHLNLQSPH (169 aa). 60–67 is a binding site for ATP; the sequence is MATGNGKS. The short motif at 159 to 162 is the DEAH box element; sequence DEAH. Residues 236–385 enclose the Helicase C-terminal domain; that stretch reads PMEQLCRFVL…IEALKLQAIG (150 aa). Residues Cys-393, Cys-410, Cys-413, and Cys-416 each coordinate Zn(2+). One can recognise an HRDC domain in the interval 544–624; that stretch reads AQYDKDLFAR…QQHKKVLTQH (81 aa).

The protein belongs to the helicase family. RecQ subfamily. Mg(2+) is required as a cofactor. Zn(2+) serves as cofactor.

The enzyme catalyses Couples ATP hydrolysis with the unwinding of duplex DNA by translocating in the 3'-5' direction.. The catalysed reaction is ATP + H2O = ADP + phosphate + H(+). In terms of biological role, an ATP-dependent DNA helicase which unwinds DNA in a 3'-5' direction. Plays a role in recombination. This is ATP-dependent DNA helicase RecQ from Pasteurella multocida (strain Pm70).